The chain runs to 262 residues: MRYQNMFETLKKHEKMAFIPFVTLGDPNYEWSFEIIKTLIISGVSALELGFAFSDPVADGITIQVSHLRALKHASMAKNFQLLRAVRDYNPHIPIGLLAYANLIFSYGVDGFYAQIKECGVDSVLIADMPLIEKELVIKSAQKHQIKQIFIASPNASSKDLEQVATHSQGYIYTLARSGVTGASRILENDASAIIKTLKAFSPTPALLGFGISQKEHITNAKGMGADGVICGSALVKIIEENLNDENAMLEKIKGFIGGMIF.

Catalysis depends on proton acceptor residues Glu48 and Asp59.

The protein belongs to the TrpA family. In terms of assembly, tetramer of two alpha and two beta chains.

The catalysed reaction is (1S,2R)-1-C-(indol-3-yl)glycerol 3-phosphate + L-serine = D-glyceraldehyde 3-phosphate + L-tryptophan + H2O. Its pathway is amino-acid biosynthesis; L-tryptophan biosynthesis; L-tryptophan from chorismate: step 5/5. The alpha subunit is responsible for the aldol cleavage of indoleglycerol phosphate to indole and glyceraldehyde 3-phosphate. In Helicobacter pylori (strain G27), this protein is Tryptophan synthase alpha chain.